Consider the following 857-residue polypeptide: DNA mismatch repair protein MutS (857 aa).

ATP is bound at residue 608–615; it reads GPNMSGKS.

Belongs to the DNA mismatch repair MutS family.

Functionally, this protein is involved in the repair of mismatches in DNA. It is possible that it carries out the mismatch recognition step. This protein has a weak ATPase activity. The polypeptide is DNA mismatch repair protein MutS (Lacticaseibacillus casei (strain BL23) (Lactobacillus casei)).